The primary structure comprises 216 residues: Protein ORM2 (216 aa).

Positions 1–50 (MIDRTKNESPAFEESPLTPNVSNLKPFPSQSNKISTPVTDHRRRRSSSVI) are disordered. The Cytoplasmic segment spans residues 1 to 78 (MIDRTKNESP…NMNATWVDQR (78 aa)). Serine 9 and serine 15 each carry phosphoserine. Residues 17-38 (LTPNVSNLKPFPSQSNKISTPV) show a composition bias toward polar residues. Threonine 18 bears the Phosphothreonine mark. 3 positions are modified to phosphoserine: serine 22, serine 29, and serine 51. Residues 79-99 (GAWLIHIVVIVLLRLFYSLFG) form a helical membrane-spanning segment. The Extracellular segment spans residues 100-103 (STPK). Residues 104–124 (WTWTLTNMTYIIGFYIMFHLV) form a helical membrane-spanning segment. Topologically, residues 125–148 (KGTPFDFNGGAYDNLTMWEQINDE) are cytoplasmic. The helical transmembrane segment at 149–169 (TLYTPTRKFLLIVPIVLFLIS) threads the bilayer. Topologically, residues 170 to 177 (NQYYRNDM) are extracellular. The helical transmembrane segment at 178–198 (TLFLSNLAVTVLIGVVPKLGI) threads the bilayer. The Cytoplasmic portion of the chain corresponds to 199–216 (THRLRISIPGITGRAQIS).

The protein belongs to the ORM family. In terms of assembly, component of the SPOTS complex, at least composed of LCB1/2 (LCB1 and/or LCB2), ORM1/2 (ORM1 and/or ORM2), SAC1 and TSC3. Post-translationally, phosphorylated in case of disruption of sphingolipid synthesis. Phosphorylation regulates the inhibitory activity of serine palmitoyltransferases (LCB1 and LCB2).

The protein resides in the endoplasmic reticulum membrane. Functionally, component of the SPOTS complex that acts as a negative regulator of sphingolipid synthesis. Acts by inhibiting serine palmitoyltransferases (LCB1 and LCB2) activity. Along with ORM1, plays a role in the phosphorylation of LAC1 and YPK1, the distribution of actin patches between mother and daughter cells, and in endocytosis. The polypeptide is Protein ORM2 (ORM2) (Saccharomyces cerevisiae (strain ATCC 204508 / S288c) (Baker's yeast)).